Reading from the N-terminus, the 209-residue chain is Chaperone protein TorD (209 aa).

The protein belongs to the TorD/DmsD family. TorD subfamily.

It is found in the cytoplasm. Its function is as follows. Involved in the biogenesis of TorA. Acts on TorA before the insertion of the molybdenum cofactor and, as a result, probably favors a conformation of the apoenzyme that is competent for acquiring the cofactor. The protein is Chaperone protein TorD of Shewanella sp. (strain ANA-3).